The following is a 356-amino-acid chain: Peptide chain release factor 1 (356 aa).

Gln-234 is modified (N5-methylglutamine).

Belongs to the prokaryotic/mitochondrial release factor family. In terms of processing, methylated by PrmC. Methylation increases the termination efficiency of RF1.

The protein localises to the cytoplasm. Peptide chain release factor 1 directs the termination of translation in response to the peptide chain termination codons UAG and UAA. This is Peptide chain release factor 1 from Parafrankia sp. (strain EAN1pec).